A 372-amino-acid chain; its full sequence is Bifunctional enzyme IspD/IspF (372 aa).

The 2-C-methyl-D-erythritol 4-phosphate cytidylyltransferase stretch occupies residues 1–211 (MLDISLIMLG…SALKAPENEL (211 aa)). The tract at residues 212–372 (FVGSGFDVHE…SLKFYNWTQI (161 aa)) is 2-C-methyl-D-erythritol 2,4-cyclodiphosphate synthase. A divalent metal cation-binding residues include Asp-218 and His-220. 4-CDP-2-C-methyl-D-erythritol 2-phosphate is bound by residues 218-220 (DVH) and 244-245 (HS). Residue His-252 participates in a divalent metal cation binding. 4-CDP-2-C-methyl-D-erythritol 2-phosphate is bound by residues 266 to 268 (DIG), 271 to 275 (FPDTD), 342 to 345 (TTTE), Phe-349, and Arg-352.

It in the N-terminal section; belongs to the IspD/TarI cytidylyltransferase family. IspD subfamily. In the C-terminal section; belongs to the IspF family. It depends on a divalent metal cation as a cofactor.

The catalysed reaction is 2-C-methyl-D-erythritol 4-phosphate + CTP + H(+) = 4-CDP-2-C-methyl-D-erythritol + diphosphate. It catalyses the reaction 4-CDP-2-C-methyl-D-erythritol 2-phosphate = 2-C-methyl-D-erythritol 2,4-cyclic diphosphate + CMP. It participates in isoprenoid biosynthesis; isopentenyl diphosphate biosynthesis via DXP pathway; isopentenyl diphosphate from 1-deoxy-D-xylulose 5-phosphate: step 2/6. Its pathway is isoprenoid biosynthesis; isopentenyl diphosphate biosynthesis via DXP pathway; isopentenyl diphosphate from 1-deoxy-D-xylulose 5-phosphate: step 4/6. Its function is as follows. Bifunctional enzyme that catalyzes the formation of 4-diphosphocytidyl-2-C-methyl-D-erythritol from CTP and 2-C-methyl-D-erythritol 4-phosphate (MEP) (IspD), and catalyzes the conversion of 4-diphosphocytidyl-2-C-methyl-D-erythritol 2-phosphate (CDP-ME2P) to 2-C-methyl-D-erythritol 2,4-cyclodiphosphate (ME-CPP) with a corresponding release of cytidine 5-monophosphate (CMP) (IspF). The protein is Bifunctional enzyme IspD/IspF of Campylobacter concisus (strain 13826).